Here is a 28-residue protein sequence, read N- to C-terminus: Conotoxin Cl9b (28 aa).

2 positions are modified to 4-hydroxyproline: proline 17 and proline 28.

Contains 3 disulfide bonds. As to expression, expressed by the venom duct.

It is found in the secreted. The sequence is that of Conotoxin Cl9b from Californiconus californicus (California cone).